A 130-amino-acid chain; its full sequence is Small ribosomal subunit protein uS11 (130 aa).

It belongs to the universal ribosomal protein uS11 family. In terms of assembly, part of the 30S ribosomal subunit. Interacts with proteins S7 and S18. Binds to IF-3.

Its function is as follows. Located on the platform of the 30S subunit, it bridges several disparate RNA helices of the 16S rRNA. Forms part of the Shine-Dalgarno cleft in the 70S ribosome. The polypeptide is Small ribosomal subunit protein uS11 (Kosmotoga olearia (strain ATCC BAA-1733 / DSM 21960 / TBF 19.5.1)).